Consider the following 122-residue polypeptide: Holo-[acyl-carrier-protein] synthase (122 aa).

Mg(2+) contacts are provided by Asp-8 and Glu-56.

It belongs to the P-Pant transferase superfamily. AcpS family. Mg(2+) serves as cofactor.

Its subcellular location is the cytoplasm. The catalysed reaction is apo-[ACP] + CoA = holo-[ACP] + adenosine 3',5'-bisphosphate + H(+). Its function is as follows. Transfers the 4'-phosphopantetheine moiety from coenzyme A to a Ser of acyl-carrier-protein. The polypeptide is Holo-[acyl-carrier-protein] synthase (Streptomyces griseus subsp. griseus (strain JCM 4626 / CBS 651.72 / NBRC 13350 / KCC S-0626 / ISP 5235)).